The following is a 108-amino-acid chain: Urease subunit beta (108 aa).

Belongs to the urease beta subunit family. In terms of assembly, heterotrimer of UreA (gamma), UreB (beta) and UreC (alpha) subunits. Three heterotrimers associate to form the active enzyme.

It is found in the cytoplasm. It catalyses the reaction urea + 2 H2O + H(+) = hydrogencarbonate + 2 NH4(+). Its pathway is nitrogen metabolism; urea degradation; CO(2) and NH(3) from urea (urease route): step 1/1. In Chromohalobacter salexigens (strain ATCC BAA-138 / DSM 3043 / CIP 106854 / NCIMB 13768 / 1H11), this protein is Urease subunit beta.